The following is a 115-amino-acid chain: Small ribosomal subunit protein bS16 (115 aa).

Residues 81 to 115 (GLAPKPTYNEQPKKSAPKAKAQERAKAAADAAAAA) are disordered.

Belongs to the bacterial ribosomal protein bS16 family.

The polypeptide is Small ribosomal subunit protein bS16 (Gluconobacter oxydans (strain 621H) (Gluconobacter suboxydans)).